Reading from the N-terminus, the 757-residue chain is Mitofusin-2 (757 aa).

At 1–604 (MSLLFSRCNS…TQEELMVSMV (604 aa)) the chain is on the cytoplasmic side. Residues 30–94 (KHFVTAKKKI…VRGISEVLAR (65 aa)) are part of a helix bundle domain, formed by helices from N-terminal and C-terminal regions. Residues 93 to 342 (ARRHMKVAFF…VRMFEFQNFE (250 aa)) enclose the Dynamin-type G domain. Residues 103 to 110 (GRTSNGKS) form a G1 motif region. Residue 106 to 111 (SNGKST) participates in GTP binding. Position 111 is a phosphothreonine; by PINK1 (Thr-111). Positions 129 to 130 (TT) are G2 motif. A G3 motif region spans residues 199-202 (DSPG). 258–261 (NRWD) lines the GTP pocket. A G4 motif region spans residues 258–261 (NRWD). Position 288 (Glu-288) is a region of interest, G5 motif. Residues Ser-305 and Lys-307 each coordinate GTP. Positions 359–385 (EQHTVRAKQIAEAVRLIMDSLHIAAQE) are part of a helix bundle domain, formed by helices from N-terminal and C-terminal regions. The stretch at 406 to 434 (KQLELLAQDYKLRIKQITEEVERQVSTAM) forms a coiled coil. Ser-442 bears the Phosphoserine mark. A helical transmembrane segment spans residues 605–625 (TGLASLTSRTSMGILVVGGVV). A topological domain (mitochondrial intermembrane) is located at residue Trp-626. Residues 627–647 (KAVGWRLIALSFGLYGLLYVY) traverse the membrane as a helical segment. Over 648 to 757 (ERLTWTTKAK…FTHQYLQPSR (110 aa)) the chain is Cytoplasmic. A coiled-coil region spans residues 696–738 (FAHLCQQVDITRDNLEQEIAAMNKKVEALDSLQSRAKLLRNKA). The part of a helix bundle domain, formed by helices from N-terminal and C-terminal regions stretch occupies residues 722-753 (EALDSLQSRAKLLRNKAGWLDSELNMFTHQYL).

It belongs to the TRAFAC class dynamin-like GTPase superfamily. Dynamin/Fzo/YdjA family. Mitofusin subfamily. In terms of assembly, forms homomultimers and heteromultimers with MFN1. Oligomerization is essential for mitochondrion fusion. Interacts with VAT1. Interacts with STOML2; may form heterooligomers. Interacts (phosphorylated) with PRKN. Interacts with EIF2AK3. Interacts with THG1L; THG1L probably functions as a guanyl-nucleotide exchange factor/GEF, activating MFN2. Post-translationally, phosphorylated by PINK1. Ubiquitinated by non-degradative ubiquitin by PRKN, promoting mitochondrial fusion; deubiquitination by USP30 inhibits mitochondrial fusion. Ubiquitinated by HUWE1 when dietary stearate (C18:0) levels are low; ubiquitination inhibits mitochondrial fusion. In terms of tissue distribution, ubiquitous. Expression is markedly reduced in ApoE-knockout mouse atherosclerotic arteries.

It is found in the mitochondrion outer membrane. The catalysed reaction is GTP + H2O = GDP + phosphate + H(+). In terms of biological role, mitochondrial outer membrane GTPase that mediates mitochondrial clustering and fusion. Mitochondria are highly dynamic organelles, and their morphology is determined by the equilibrium between mitochondrial fusion and fission events. Overexpression induces the formation of mitochondrial networks. Membrane clustering requires GTPase activity and may involve a major rearrangement of the coiled coil domains. Plays a central role in mitochondrial metabolism and may be associated with obesity and/or apoptosis processes. Plays an important role in the regulation of vascular smooth muscle cell proliferation. Involved in the clearance of damaged mitochondria via selective autophagy (mitophagy). Is required for PRKN recruitment to dysfunctional mitochondria. Involved in the control of unfolded protein response (UPR) upon ER stress including activation of apoptosis and autophagy during ER stress. Acts as an upstream regulator of EIF2AK3 and suppresses EIF2AK3 activation under basal conditions. The polypeptide is Mitofusin-2 (Mfn2) (Mus musculus (Mouse)).